We begin with the raw amino-acid sequence, 575 residues long: Membrane protein insertase YidC (575 aa).

A run of 6 helical transmembrane segments spans residues 6-26, 357-377, 381-401, 448-468, 490-510, and 526-546; these read VFLIFAWLMVAALLWMEWGKD, FSIMAIIGQGLFWVLSHLHSF, WGWAIIGLVLLLRLALYPLSA, GGCLPLLIQMPIFFALYWVLV, PYFILPVLNIAIMWATQKLTP, and PLVFGVMMAFMPAGLVLYWVV.

The protein belongs to the OXA1/ALB3/YidC family. Type 1 subfamily. Interacts with the Sec translocase complex via SecD. Specifically interacts with transmembrane segments of nascent integral membrane proteins during membrane integration.

The protein resides in the cell inner membrane. Functionally, required for the insertion and/or proper folding and/or complex formation of integral membrane proteins into the membrane. Involved in integration of membrane proteins that insert both dependently and independently of the Sec translocase complex, as well as at least some lipoproteins. Aids folding of multispanning membrane proteins. The polypeptide is Membrane protein insertase YidC (Xanthomonas campestris pv. campestris (strain B100)).